We begin with the raw amino-acid sequence, 390 residues long: 4-hydroxy-3-methylbut-2-en-1-yl diphosphate synthase (flavodoxin) (390 aa).

[4Fe-4S] cluster contacts are provided by cysteine 281, cysteine 284, cysteine 316, and glutamate 323.

It belongs to the IspG family. Requires [4Fe-4S] cluster as cofactor.

It catalyses the reaction (2E)-4-hydroxy-3-methylbut-2-enyl diphosphate + oxidized [flavodoxin] + H2O + 2 H(+) = 2-C-methyl-D-erythritol 2,4-cyclic diphosphate + reduced [flavodoxin]. It participates in isoprenoid biosynthesis; isopentenyl diphosphate biosynthesis via DXP pathway; isopentenyl diphosphate from 1-deoxy-D-xylulose 5-phosphate: step 5/6. Its function is as follows. Converts 2C-methyl-D-erythritol 2,4-cyclodiphosphate (ME-2,4cPP) into 1-hydroxy-2-methyl-2-(E)-butenyl 4-diphosphate. In Salinispora arenicola (strain CNS-205), this protein is 4-hydroxy-3-methylbut-2-en-1-yl diphosphate synthase (flavodoxin).